An 813-amino-acid polypeptide reads, in one-letter code: MVALLLFPMLLQLLSPTCAQTQKNITLGSTLAPQSPASSWLSPSGDFAFGFRPVEGNTSFYLIAVWFNKISDKTVVWYAKNTDQDPSIVEVPSDSFLQLTNDGALSLKDRSGQEGWNPQVTSVAYASMRDTGNFVLLGADGTTKWQTFDMPSDTILPTQVIPCNKTRNKSLRARLDINDYSSGRFLLDVQTDGNLALYLVAVPSGSKYQQYWSTDTTGNGSELVFSETGKVYFALTDGTQINISSGAGIGSMADYFHRATLDPDGVFRQYVYPKKANAGILGGETWTAVSMQPQNICHAIVSDVGSGVCGFNSYCTFDGTRNQIASCQCPPWYKFFDEQKKYKGCKQDFQPHSCDLDEATALAQFELRPIYGVDWPLSDYEKYEPIGQDDCGRLCVIDCFCAMAVYNQSTSTCWKKKLPLSNGNMADYVQRTVLLKVPSSNSSQSMISTSSNKWKRNRKHWVLGSSLILGTSILVNFALISIFLFGTYCRIATKKNIPLSQASSKSQLPLKTFTYKELEKATAGFHEILGAGASGVVYKGQLEDELKTNIAVKKIDKLQPETEKEFMVEVETIGQTFHKNLVRLLGFCNEGAERLLVYEFMTNGPLNRLLFDNSRPHWNTRVHIALGVARGLLYLHDECSKQIIHCDIKPQNILLDDNLVAKISDFGLAKLLLTNQTRTNTGIRGTRGYVAPEWFKNIGISTKVDVYSFGVILLELVCCRRNVELEVVDEEQTIVTYWANDCYRSGRIDLLVEGDDEAIYNIKKVERFVTVALWCLQEDPSMRPNMLKVTQMLDGAVAIPSPPDPCSFISSLP.

A signal peptide spans M1–A19. The Extracellular portion of the chain corresponds to Q20 to S466. One can recognise a Bulb-type lectin domain in the interval Q22–D149. Residues N24, N57, N164, N168, N219, and N242 are each glycosylated (N-linked (GlcNAc...) asparagine). The EGF-like; atypical domain occupies P293–K346. 5 disulfides stabilise this stretch: C297–C315, C309–C327, C329–C345, C391–C413, and C395–C401. In terms of domain architecture, PAN spans C354–V433. N407 and N441 each carry an N-linked (GlcNAc...) asparagine glycan. A helical membrane pass occupies residues L467–T487. The Cytoplasmic portion of the chain corresponds to Y488 to P813. One can recognise a Protein kinase domain in the interval A523–V797. ATP is bound by residues L529–V537 and K553. D647 serves as the catalytic Proton acceptor.

It belongs to the protein kinase superfamily. Ser/Thr protein kinase family.

The protein localises to the membrane. The catalysed reaction is L-seryl-[protein] + ATP = O-phospho-L-seryl-[protein] + ADP + H(+). The enzyme catalyses L-threonyl-[protein] + ATP = O-phospho-L-threonyl-[protein] + ADP + H(+). In terms of biological role, involved in innate immunity. Required for the expression of defense-related genes PR1A, LOX2 and CHS1 upon biotic stresses. Required for basal resistance to the fungal blast (M.grisea), bacterial blight (X.oryzae pv. oryzae, Xoo) and the herbivorous insect brown planthopper (N.lugens, BPH). May be involved in several defense signaling pathways. Involved in the promotion of seed germination. Required for the expression of alpha-amylase genes during seed germination. Involved in resistance against the herbivorous insect brown planthopper (N.lugens, BPH). Member of the BPH3 (BPH resistance locus 3) cluster which contains LECRK1, LECRK2 and LECRK3. This is G-type lectin S-receptor-like serine/threonine-protein kinase LECRK1 from Oryza sativa subsp. japonica (Rice).